A 75-amino-acid chain; its full sequence is Small ribosomal subunit protein bS18 (75 aa).

Belongs to the bacterial ribosomal protein bS18 family. In terms of assembly, part of the 30S ribosomal subunit. Forms a tight heterodimer with protein bS6.

Functionally, binds as a heterodimer with protein bS6 to the central domain of the 16S rRNA, where it helps stabilize the platform of the 30S subunit. This chain is Small ribosomal subunit protein bS18, found in Shewanella denitrificans (strain OS217 / ATCC BAA-1090 / DSM 15013).